Here is a 219-residue protein sequence, read N- to C-terminus: Thiamine-phosphate synthase (219 aa).

4-amino-2-methyl-5-(diphosphooxymethyl)pyrimidine contacts are provided by residues 44 to 48 (QFREK) and N79. Mg(2+) is bound by residues D80 and D99. S117 serves as a coordination point for 4-amino-2-methyl-5-(diphosphooxymethyl)pyrimidine. 143 to 145 (TST) lines the 2-[(2R,5Z)-2-carboxy-4-methylthiazol-5(2H)-ylidene]ethyl phosphate pocket. K146 provides a ligand contact to 4-amino-2-methyl-5-(diphosphooxymethyl)pyrimidine. Residues G175 and 195–196 (IS) contribute to the 2-[(2R,5Z)-2-carboxy-4-methylthiazol-5(2H)-ylidene]ethyl phosphate site.

Belongs to the thiamine-phosphate synthase family. The cofactor is Mg(2+).

The catalysed reaction is 2-[(2R,5Z)-2-carboxy-4-methylthiazol-5(2H)-ylidene]ethyl phosphate + 4-amino-2-methyl-5-(diphosphooxymethyl)pyrimidine + 2 H(+) = thiamine phosphate + CO2 + diphosphate. The enzyme catalyses 2-(2-carboxy-4-methylthiazol-5-yl)ethyl phosphate + 4-amino-2-methyl-5-(diphosphooxymethyl)pyrimidine + 2 H(+) = thiamine phosphate + CO2 + diphosphate. It carries out the reaction 4-methyl-5-(2-phosphooxyethyl)-thiazole + 4-amino-2-methyl-5-(diphosphooxymethyl)pyrimidine + H(+) = thiamine phosphate + diphosphate. Its pathway is cofactor biosynthesis; thiamine diphosphate biosynthesis; thiamine phosphate from 4-amino-2-methyl-5-diphosphomethylpyrimidine and 4-methyl-5-(2-phosphoethyl)-thiazole: step 1/1. Its function is as follows. Condenses 4-methyl-5-(beta-hydroxyethyl)thiazole monophosphate (THZ-P) and 2-methyl-4-amino-5-hydroxymethyl pyrimidine pyrophosphate (HMP-PP) to form thiamine monophosphate (TMP). The chain is Thiamine-phosphate synthase from Bacillus cereus (strain AH187).